The sequence spans 146 residues: uncharacterized protein (146 aa).

An N-terminal signal peptide occupies residues 1-17 (MKRLLILTALLPFVGFA). Disordered stretches follow at residues 27 to 54 (NQPGYQIPSQQRMQTQMQTQQIQQKGML) and 70 to 146 (ENQI…TIGP). Residues 32–54 (QIPSQQRMQTQMQTQQIQQKGML) are compositionally biased toward low complexity. Residues 77–118 (SQRVLQSQPGERNPARQQMLPNTNGGMLNSNRNPDSSLNQQH) show a composition bias toward polar residues.

This is an uncharacterized protein from Escherichia coli (strain K12).